We begin with the raw amino-acid sequence, 365 residues long: Uroporphyrinogen decarboxylase (365 aa).

Residues 27–31, Asp-77, Tyr-154, Thr-209, and His-327 each bind substrate; that span reads RQAGR.

It belongs to the uroporphyrinogen decarboxylase family. In terms of assembly, homodimer.

It is found in the cytoplasm. It carries out the reaction uroporphyrinogen III + 4 H(+) = coproporphyrinogen III + 4 CO2. Its pathway is porphyrin-containing compound metabolism; protoporphyrin-IX biosynthesis; coproporphyrinogen-III from 5-aminolevulinate: step 4/4. Its function is as follows. Catalyzes the decarboxylation of four acetate groups of uroporphyrinogen-III to yield coproporphyrinogen-III. The protein is Uroporphyrinogen decarboxylase of Nitrosospira multiformis (strain ATCC 25196 / NCIMB 11849 / C 71).